The chain runs to 251 residues: Guanine nucleotide-binding protein subunit gamma 3 (251 aa).

Residues 1–10 (MSAPSGGGEG) are compositionally biased toward gly residues. A disordered region spans residues 1–44 (MSAPSGGGEGGGKESAAGGVSSSSLAPSSLPPPRPKSPPEYPDL). Over residues 14–28 (ESAAGGVSSSSLAPS) the composition is skewed to low complexity. Positions 29-41 (SLPPPRPKSPPEY) are enriched in pro residues. The G protein gamma domain maps to 46 to 126 (GKRREAARVQ…LSLVSFCCCC (81 aa)). Cysteine 248 carries the cysteine methyl ester modification. A lipid anchor (S-farnesyl cysteine) is attached at cysteine 248. The propeptide at 249 to 251 (LAF) is removed in mature form.

In terms of assembly, g proteins are composed of 3 units, alpha, beta and gamma. In terms of tissue distribution, expressed in flowers and siliques.

Guanine nucleotide-binding proteins (G proteins) are involved as a modulator or transducer in various transmembrane signaling systems. The beta and gamma chains are required for the GTPase activity, for replacement of GDP by GTP, and for G protein-effector interaction. The chain is Guanine nucleotide-binding protein subunit gamma 3 (GG3) from Arabidopsis thaliana (Mouse-ear cress).